The primary structure comprises 1588 residues: uncharacterized protein (1588 aa).

The span at 486 to 495 shows a compositional bias: basic and acidic residues; sequence RKRLTSKTED. Disordered regions lie at residues 486–515 and 1146–1176; these read RKRL…KRRP and GGQD…RELN. Over residues 498-507 the composition is skewed to polar residues; it reads NQWTRDCQNS. Positions 1150–1169 are enriched in low complexity; the sequence is NVSDQSENQSENQSLESETS.

Its subcellular location is the virion. This is an uncharacterized protein from Acanthamoeba polyphaga (Amoeba).